Here is a 505-residue protein sequence, read N- to C-terminus: Monocarboxylate transporter 10 (505 aa).

The span at 1 to 14 (MTEPEPTLEQEPTP) shows a compositional bias: acidic residues. The tract at residues 1 to 64 (MTEPEPTLEQ…EQKSPEEFEP (64 aa)) is disordered. Over 1-66 (MTEPEPTLEQ…KSPEEFEPPE (66 aa)) the chain is Cytoplasmic. Residues 15 to 31 (EPEPTQEPTPEPTPEPE) show a composition bias toward pro residues. Residues 32–41 (PTQEPESEPE) are compositionally biased toward acidic residues. Residues 67–87 (GGWGWVVMLASMWCNGSVFGI) form a helical membrane-spanning segment. At 88–114 (QNAFGIMFVYLLNEFGSEHDADLRFKT) the chain is on the extracellular side. Residues 115–135 (AWVGSLSMGMIFFCSPIVSVF) traverse the membrane as a helical segment. Residues 136 to 142 (TDLLGCR) lie on the Cytoplasmic side of the membrane. Residues 143-163 (ITAVGGAAVGCVGLLASSFVT) form a helical membrane-spanning segment. The Extracellular portion of the chain corresponds to 164–171 (SLGPMYFT). Residues 172-192 (YGIVFACGCSFAYQPSLVILG) traverse the membrane as a helical segment. Residues 193-204 (HYFKRRLGLVNG) lie on the Cytoplasmic side of the membrane. The chain crosses the membrane as a helical span at residues 205 to 225 (IVTAGSSVFTITLPYMLSGLL). The Extracellular segment spans residues 226-235 (KSVGLYHTLR). The chain crosses the membrane as a helical span at residues 236–256 (VLAIFMFILMLAGLTYKPLLP). Residues 257–286 (KPVSSSKPGSRCPPLSRIFNVNIWKSLGYR) lie on the Cytoplasmic side of the membrane. Residues 287-307 (IWAFGIPAALYGYFVPYVHLM) traverse the membrane as a helical segment. Over 308 to 321 (THVEERFGPEANKE) the chain is Extracellular. Residues 322–342 (VLLACIGITSGVGRLIFGRVA) traverse the membrane as a helical segment. Position 343 (aspartate 343) is a topological domain, cytoplasmic. Residues 344 to 364 (YVPGVNKVFLQVSSFMVIGVM) traverse the membrane as a helical segment. Over 365–377 (SMMIPLCHVFGGL) the chain is Extracellular. The chain crosses the membrane as a helical span at residues 378 to 400 (IAVCLLMGLFDGCFICIMAPIAF). At 401–411 (ELVGSQNVSQA) the chain is on the cytoplasmic side. The chain crosses the membrane as a helical span at residues 412–432 (IGFLLGMMSIPMTVGPPIAGF). The Extracellular portion of the chain corresponds to 433-443 (LRDRLGSYDVA). The helical transmembrane segment at 444–464 (FYLAGIPPLIGGAVLCAIPWV) threads the bilayer. The Cytoplasmic segment spans residues 465–505 (EARRKRREAANTAENTEKMLESRSPPLEDTVCRTEEPESVI). The segment at 474 to 505 (ANTAENTEKMLESRSPPLEDTVCRTEEPESVI) is disordered. Basic and acidic residues predominate over residues 494 to 505 (TVCRTEEPESVI).

This sequence belongs to the major facilitator superfamily. Monocarboxylate porter (TC 2.A.1.13) family.

It is found in the cell membrane. The protein localises to the basolateral cell membrane. The enzyme catalyses L-tryptophan(in) = L-tryptophan(out). It carries out the reaction L-tyrosine(in) = L-tyrosine(out). The catalysed reaction is L-phenylalanine(in) = L-phenylalanine(out). It catalyses the reaction 3,3',5-triiodo-L-thyronine(out) = 3,3',5-triiodo-L-thyronine(in). The enzyme catalyses L-thyroxine(out) = L-thyroxine(in). In terms of biological role, sodium- and proton-independent thyroid hormones and aromatic acids transporter. Mediates both uptake and efflux of 3,5,3'-triiodothyronine (T3) and 3,5,3',5'-tetraiodothyronine (T4) with high affinity, suggesting a role in the homeostasis of thyroid hormone levels. Responsible for low affinity bidirectional transport of the aromatic amino acids, such as phenylalanine, tyrosine, tryptophan and L-3,4-dihydroxyphenylalanine (L-dopa). Plays an important role in homeostasis of aromatic amino acids. The sequence is that of Monocarboxylate transporter 10 (slc16a10) from Danio rerio (Zebrafish).